The following is a 193-amino-acid chain: DNA damage-inducible transcript 4-like protein (193 aa).

The protein belongs to the DDIT4 family. Up-regulated in atherosclerotic plaques relative to healthy segments of the same artery.

Its subcellular location is the cytoplasm. In terms of biological role, inhibits cell growth by regulating the TOR signaling pathway upstream of the TSC1-TSC2 complex and downstream of AKT1. This Homo sapiens (Human) protein is DNA damage-inducible transcript 4-like protein (DDIT4L).